A 1047-amino-acid chain; its full sequence is Probable sucrose-phosphate synthase 2 (1047 aa).

A compositionally biased stretch (basic and acidic residues) spans 101 to 123 (EGKNAKREAKREREREKARREVT). The tract at residues 101 to 153 (EGKNAKREAKREREREKARREVTAEMSEDFSEGEKADLPGEIPTPSDNNTKGR) is disordered. Phosphoserine occurs at positions 127, 131, and 159. Positions 712 to 731 (KSGSNNGVDTNLDAEDRAAE) are disordered.

It belongs to the glycosyltransferase 1 family. In terms of assembly, homodimer or homotetramer. Expressed in roots, cauline leaves, flower buds, flowers and anthers. Highly expressed in maturing nectaries.

It catalyses the reaction beta-D-fructose 6-phosphate + UDP-alpha-D-glucose = sucrose 6(F)-phosphate + UDP + H(+). Its pathway is glycan biosynthesis; sucrose biosynthesis; sucrose from D-fructose 6-phosphate and UDP-alpha-D-glucose: step 1/2. With respect to regulation, activity is regulated by phosphorylation and moderated by concentration of metabolites and light. In terms of biological role, plays a role in photosynthetic sucrose synthesis by catalyzing the rate-limiting step of sucrose biosynthesis from UDP-glucose and fructose- 6-phosphate. Involved in the regulation of carbon partitioning in the leaves of plants. May regulate the synthesis of sucrose and therefore play a major role as a limiting factor in the export of photoassimilates out of the leaf. Plays a role for sucrose availability that is essential for plant growth and fiber elongation. Required for nectar secretion. This is Probable sucrose-phosphate synthase 2 (SPS2) from Arabidopsis thaliana (Mouse-ear cress).